A 78-amino-acid chain; its full sequence is MKLTCMMIVTVLFLTAWIFITADNSRNGIENLPRMRRHEMKNPKASKLNKRGCREGGEFCGTLYEERCCSGWCFFVCV.

A signal peptide spans 1–22 (MKLTCMMIVTVLFLTAWIFITA). The propeptide occupies 23-49 (DNSRNGIENLPRMRRHEMKNPKASKLN). 3 cysteine pairs are disulfide-bonded: C53–C69, C60–C73, and C68–C77.

Belongs to the conotoxin O1 superfamily. As to expression, expressed by the venom duct.

Its subcellular location is the secreted. This Conus imperialis (Imperial cone) protein is Conotoxin 5.